Consider the following 265-residue polypeptide: Adenosylcobinamide-GDP ribazoletransferase (265 aa).

The next 4 membrane-spanning stretches (helical) occupy residues 51–71 (LVGV…QLIF), 72–92 (PDSV…GAFH), 121–140 (IGTY…FVLW), and 203–223 (VASL…LFAF).

Belongs to the CobS family. It depends on Mg(2+) as a cofactor.

It localises to the cell inner membrane. The enzyme catalyses alpha-ribazole + adenosylcob(III)inamide-GDP = adenosylcob(III)alamin + GMP + H(+). It carries out the reaction alpha-ribazole 5'-phosphate + adenosylcob(III)inamide-GDP = adenosylcob(III)alamin 5'-phosphate + GMP + H(+). The protein operates within cofactor biosynthesis; adenosylcobalamin biosynthesis; adenosylcobalamin from cob(II)yrinate a,c-diamide: step 7/7. Joins adenosylcobinamide-GDP and alpha-ribazole to generate adenosylcobalamin (Ado-cobalamin). Also synthesizes adenosylcobalamin 5'-phosphate from adenosylcobinamide-GDP and alpha-ribazole 5'-phosphate. In Vibrio parahaemolyticus serotype O3:K6 (strain RIMD 2210633), this protein is Adenosylcobinamide-GDP ribazoletransferase.